The chain runs to 131 residues: MPEETLLAFDFGEKKIGVAIGNTLTCHARPLEIIFSERRDERFGRIQALLEAWRPQRVVVGLALATDGGDQPATLRCRRFANQLHGRFGVTVELVDERGSSMEAQEKLGSHAPDDAMAAAIILQRYLDRLA.

This sequence belongs to the YqgF nuclease family.

It localises to the cytoplasm. In terms of biological role, could be a nuclease involved in processing of the 5'-end of pre-16S rRNA. In Bordetella avium (strain 197N), this protein is Putative pre-16S rRNA nuclease.